The primary structure comprises 59 residues: Large ribosomal subunit protein uL30 (59 aa).

The protein belongs to the universal ribosomal protein uL30 family. Part of the 50S ribosomal subunit.

This is Large ribosomal subunit protein uL30 from Mycolicibacterium vanbaalenii (strain DSM 7251 / JCM 13017 / BCRC 16820 / KCTC 9966 / NRRL B-24157 / PYR-1) (Mycobacterium vanbaalenii).